The chain runs to 313 residues: 3'-5' exoribonuclease YhaM (313 aa).

The HD domain maps to 163–279; that stretch reads HVVSMLRLAK…LHQIDLMDAS (117 aa).

The protein belongs to the YhaM family.

Shows a 3'-5' exoribonuclease activity. The polypeptide is 3'-5' exoribonuclease YhaM (Listeria welshimeri serovar 6b (strain ATCC 35897 / DSM 20650 / CCUG 15529 / CIP 8149 / NCTC 11857 / SLCC 5334 / V8)).